Consider the following 546-residue polypeptide: CTP synthase (546 aa).

An amidoligase domain region spans residues 1-266; sequence MTTRYIFVTG…DDLVVKRFGL (266 aa). S14 lines the CTP pocket. Position 14 (S14) interacts with UTP. Residues 15-20 and D72 contribute to the ATP site; that span reads SLGKGI. Residues D72 and E140 each coordinate Mg(2+). Residues 147–149, 187–192, and K223 each bind CTP; these read DIE and KTKPTQ. UTP-binding positions include 187-192 and K223; that span reads KTKPTQ. ATP is bound at residue 239-241; that stretch reads KDV. The 252-residue stretch at 291–542 folds into the Glutamine amidotransferase type-1 domain; sequence VIGMVGKYIE…VAAASAHQKR (252 aa). Residue G352 participates in L-glutamine binding. C379 (nucleophile; for glutamine hydrolysis) is an active-site residue. Residues 380–383, E403, and R470 contribute to the L-glutamine site; that span reads LGMQ. Residues H515 and E517 contribute to the active site.

It belongs to the CTP synthase family. Homotetramer.

The catalysed reaction is UTP + L-glutamine + ATP + H2O = CTP + L-glutamate + ADP + phosphate + 2 H(+). The enzyme catalyses L-glutamine + H2O = L-glutamate + NH4(+). It catalyses the reaction UTP + NH4(+) + ATP = CTP + ADP + phosphate + 2 H(+). It participates in pyrimidine metabolism; CTP biosynthesis via de novo pathway; CTP from UDP: step 2/2. Its activity is regulated as follows. Allosterically activated by GTP, when glutamine is the substrate; GTP has no effect on the reaction when ammonia is the substrate. The allosteric effector GTP functions by stabilizing the protein conformation that binds the tetrahedral intermediate(s) formed during glutamine hydrolysis. Inhibited by the product CTP, via allosteric rather than competitive inhibition. Its function is as follows. Catalyzes the ATP-dependent amination of UTP to CTP with either L-glutamine or ammonia as the source of nitrogen. Regulates intracellular CTP levels through interactions with the four ribonucleotide triphosphates. The protein is CTP synthase of Shewanella sp. (strain MR-7).